The primary structure comprises 40 residues: Large ribosomal subunit protein bL36 (40 aa).

It belongs to the bacterial ribosomal protein bL36 family.

The chain is Large ribosomal subunit protein bL36 from Corynebacterium kroppenstedtii (strain DSM 44385 / JCM 11950 / CIP 105744 / CCUG 35717).